The following is a 386-amino-acid chain: Patatin-04/09 (386 aa).

Residues 1-23 (MATTKSFLILFFMILATTSSTCA) form the signal peptide. One can recognise a PNPLA domain in the interval 32-229 (LSIDGGGIKG…TVGDPALLSL (198 aa)). The GXGXXG signature appears at 36–41 (GGGIKG). Residues 75-79 (GTSTG) carry the GXSXG motif. The Nucleophile role is filled by S77. N-linked (GlcNAc...) asparagine glycosylation is present at N115. D215 acts as the Proton acceptor in catalysis. A DGA/G motif is present at residues 215–217 (DGG). Positions 321-384 (ENALNGTTTE…DRKKLRANKA (64 aa)) form a coiled coil. N325 carries an N-linked (GlcNAc...) asparagine glycan.

This sequence belongs to the patatin family. Tuber.

It is found in the vacuole. In terms of biological role, probable lipolytic acyl hydrolase (LAH), an activity which is thought to be involved in the response of tubers to pathogens. The chain is Patatin-04/09 from Solanum tuberosum (Potato).